Here is a 243-residue protein sequence, read N- to C-terminus: uncharacterized protein (243 aa).

Positions 1–19 (MKSLPLLGILAFAANRLSA) are cleaved as a signal peptide. Residues Asn-112 and Asn-206 are each glycosylated (N-linked (GlcNAc...) asparagine).

This is an uncharacterized protein from Encephalitozoon cuniculi (strain GB-M1) (Microsporidian parasite).